The chain runs to 311 residues: Acetyl-coenzyme A carboxylase carboxyl transferase subunit alpha (311 aa).

Residues 36–286 (NLEKEVAKVY…ASYFVSKLEK (251 aa)) form the CoA carboxyltransferase C-terminal domain.

It belongs to the AccA family. As to quaternary structure, acetyl-CoA carboxylase is a heterohexamer composed of biotin carboxyl carrier protein (AccB), biotin carboxylase (AccC) and two subunits each of ACCase subunit alpha (AccA) and ACCase subunit beta (AccD).

The protein resides in the cytoplasm. The enzyme catalyses N(6)-carboxybiotinyl-L-lysyl-[protein] + acetyl-CoA = N(6)-biotinyl-L-lysyl-[protein] + malonyl-CoA. The protein operates within lipid metabolism; malonyl-CoA biosynthesis; malonyl-CoA from acetyl-CoA: step 1/1. Functionally, component of the acetyl coenzyme A carboxylase (ACC) complex. First, biotin carboxylase catalyzes the carboxylation of biotin on its carrier protein (BCCP) and then the CO(2) group is transferred by the carboxyltransferase to acetyl-CoA to form malonyl-CoA. The sequence is that of Acetyl-coenzyme A carboxylase carboxyl transferase subunit alpha from Campylobacter curvus (strain 525.92).